We begin with the raw amino-acid sequence, 155 residues long: Large ribosomal subunit protein uL30 (155 aa).

This sequence belongs to the universal ribosomal protein uL30 family. In terms of assembly, part of the 50S ribosomal subunit.

This is Large ribosomal subunit protein uL30 from Pyrococcus abyssi (strain GE5 / Orsay).